Reading from the N-terminus, the 508-residue chain is D-alanine--D-alanyl carrier protein ligase (508 aa).

152-153 (TS) lines the ATP pocket. Position 198 (Asp198) interacts with D-alanine. 293–298 (NTYGPT) is a binding site for ATP. Val302 is a D-alanine binding site. ATP-binding positions include Asp384, 396 to 399 (YRGR), and Lys495. Lys495 is a D-alanine binding site.

Belongs to the ATP-dependent AMP-binding enzyme family. DltA subfamily.

It is found in the cytoplasm. It catalyses the reaction holo-[D-alanyl-carrier protein] + D-alanine + ATP = D-alanyl-[D-alanyl-carrier protein] + AMP + diphosphate. It participates in cell wall biogenesis; lipoteichoic acid biosynthesis. In terms of biological role, catalyzes the first step in the D-alanylation of lipoteichoic acid (LTA), the activation of D-alanine and its transfer onto the D-alanyl carrier protein (Dcp) DltC. In an ATP-dependent two-step reaction, forms a high energy D-alanyl-AMP intermediate, followed by transfer of the D-alanyl residue as a thiol ester to the phosphopantheinyl prosthetic group of the Dcp. D-alanylation of LTA plays an important role in modulating the properties of the cell wall in Gram-positive bacteria, influencing the net charge of the cell wall. The polypeptide is D-alanine--D-alanyl carrier protein ligase (Lactiplantibacillus plantarum (strain ATCC BAA-793 / NCIMB 8826 / WCFS1) (Lactobacillus plantarum)).